A 645-amino-acid chain; its full sequence is Serine/threonine-protein kinase Nek11 (645 aa).

One can recognise a Protein kinase domain in the interval 29–287 (YVLQQKLGSG…AIEILKIPYL (259 aa)). Residues 35-43 (LGSGSFGTV) and K61 contribute to the ATP site. D158 serves as the catalytic Proton acceptor. The residue at position 273 (S273) is a Phosphoserine; by CHEK1. A coiled-coil region spans residues 346–385 (RLRKLQAADEKARKLKKIVEEKYEENSKRMQELRSRNFQQ). The tract at residues 399-445 (GMEEKEEQPEGRLSCSPQDEDEERWQGREEESDEPTLENLPESQPIP) is disordered.

Belongs to the protein kinase superfamily. NEK Ser/Thr protein kinase family. NIMA subfamily. In terms of assembly, interacts with isoform 1 of NEK2. Mn(2+) serves as cofactor. Requires Mg(2+) as cofactor. Phosphorylated by NEK2. Phosphorylation at Ser-273 is important for its activation. As to expression, poorly expressed in cerebellum, trachea, lung, appendix, and uterus.

The protein localises to the nucleus. The protein resides in the nucleolus. The catalysed reaction is L-seryl-[protein] + ATP = O-phospho-L-seryl-[protein] + ADP + H(+). It carries out the reaction L-threonyl-[protein] + ATP = O-phospho-L-threonyl-[protein] + ADP + H(+). Autorepressed by intramolecular binding of the C-terminus which dissociates following phosphorylation by NEK2 isoform 1 in G1/S-arrested cells. NEK2 isoform 2 is largely not present in the nucleolus, and does not appear to phosphorylate NEK11. Activated in response to DNA damage. Inhibited by zinc. In terms of biological role, protein kinase which plays an important role in the G2/M checkpoint response to DNA damage. Controls degradation of CDC25A by directly phosphorylating it on residues whose phosphorylation is required for BTRC-mediated polyubiquitination and degradation. The chain is Serine/threonine-protein kinase Nek11 from Homo sapiens (Human).